A 399-amino-acid chain; its full sequence is Lysosomal acid lipase/cholesteryl ester hydrolase (399 aa).

The first 27 residues, 1–27, serve as a signal peptide directing secretion; it reads MKMRFLGLVVCLVLWTLHSEGSGGKLT. A propeptide spans 28-76 (removed in mature form); the sequence is AVDPETNMNVSEIISYWGFPSEEYLVETEDGYILCLNRIPHGRKNHSDK. 4 N-linked (GlcNAc...) asparagine glycosylation sites follow: Asn-36, Asn-72, Asn-101, and Asn-161. The region spanning 80–380 is the AB hydrolase-1 domain; the sequence is PVVFLQHGLL…EWEHLDFIWG (301 aa). Ser-174 (charge relay system) is an active-site residue. N-linked (GlcNAc...) asparagine glycosylation is found at Asn-273 and Asn-321. His-374 serves as the catalytic Charge relay system.

It belongs to the AB hydrolase superfamily. Lipase family. In terms of assembly, monomer. In terms of processing, glycosylation is not essential for catalytic activity. In terms of tissue distribution, most abundantly expressed in brain, lung, kidney and mammary gland, a moderate expression seen in placenta and expressed at low levels in the liver and heart.

It localises to the lysosome. It catalyses the reaction a sterol ester + H2O = a sterol + a fatty acid + H(+). It carries out the reaction cholesteryl (9Z-octadecenoate) + H2O = cholesterol + (9Z)-octadecenoate + H(+). The catalysed reaction is a triacylglycerol + H2O = a 1,2-diacylglycerol + a fatty acid + H(+). The enzyme catalyses 1,2-di-(9Z-octadecenoyl)-glycerol + (9Z)-octadecenoate + H(+) = 1,2,3-tri-(9Z-octadecenoyl)-glycerol + H2O. It catalyses the reaction a 1,2-diacylglycerol + H2O = a 1-acylglycerol + a fatty acid + H(+). It carries out the reaction 1,2-di-(9Z-octadecenoyl)-glycerol + H2O = 1-(9Z-octadecenoyl)-glycerol + (9Z)-octadecenoate + H(+). The catalysed reaction is a 1,3-diacylglycerol + H2O = a 1-acylglycerol + a fatty acid + H(+). The enzyme catalyses 1,3-di-(9Z-octadecenoyl)-glycerol + H2O = 1-(9Z-octadecenoyl)-glycerol + (9Z)-octadecenoate + H(+). Its function is as follows. Catalyzes the deacylation of cholesteryl ester core lipids of endocytosed low density lipoproteins to generate free fatty acids and cholesterol. Hydrolyzes triglycerides (1,2,3-triacylglycerol) and diglycerides (such as 1,2-diacylglycerol and 1,3-diacylglycerol) with preference for the acyl moieties at the sn-1 or sn-3 positions. In Homo sapiens (Human), this protein is Lysosomal acid lipase/cholesteryl ester hydrolase (LIPA).